Here is a 98-residue protein sequence, read N- to C-terminus: SPbeta prophage-derived uncharacterized protein YorB (98 aa).

The polypeptide is SPbeta prophage-derived uncharacterized protein YorB (yorB) (Bacillus subtilis (strain 168)).